Consider the following 78-residue polypeptide: uncharacterized protein (78 aa).

This is an uncharacterized protein from Methanocaldococcus jannaschii (strain ATCC 43067 / DSM 2661 / JAL-1 / JCM 10045 / NBRC 100440) (Methanococcus jannaschii).